Here is a 431-residue protein sequence, read N- to C-terminus: Enolase (431 aa).

Glutamine 167 is a binding site for (2R)-2-phosphoglycerate. Glutamate 209 acts as the Proton donor in catalysis. Mg(2+)-binding residues include aspartate 246, glutamate 289, and aspartate 316. (2R)-2-phosphoglycerate is bound by residues lysine 341, arginine 370, serine 371, and lysine 392. Lysine 341 functions as the Proton acceptor in the catalytic mechanism.

Belongs to the enolase family. As to quaternary structure, component of the RNA degradosome, a multiprotein complex involved in RNA processing and mRNA degradation. The cofactor is Mg(2+).

The protein resides in the cytoplasm. It localises to the secreted. The protein localises to the cell surface. It catalyses the reaction (2R)-2-phosphoglycerate = phosphoenolpyruvate + H2O. It participates in carbohydrate degradation; glycolysis; pyruvate from D-glyceraldehyde 3-phosphate: step 4/5. Functionally, catalyzes the reversible conversion of 2-phosphoglycerate (2-PG) into phosphoenolpyruvate (PEP). It is essential for the degradation of carbohydrates via glycolysis. The chain is Enolase from Shewanella oneidensis (strain ATCC 700550 / JCM 31522 / CIP 106686 / LMG 19005 / NCIMB 14063 / MR-1).